The chain runs to 791 residues: Protein CLASP-2 (791 aa).

Composition is skewed to low complexity over residues 259 to 271 (ASDA…SVNS), 323 to 334 (RTPNTRPMTTRT), and 372 to 381 (SQPGSRNGSP). 3 disordered regions span residues 259 to 283 (ASDA…SKLS), 315 to 391 (TRMT…TGTL), and 422 to 454 (AMNT…PQKS). Polar residues predominate over residues 422–434 (AMNTAKESLGQPS).

It belongs to the CLASP family. In terms of assembly, interacts with hcp-1 and hcp-2.

Its subcellular location is the cytoplasm. The protein resides in the cytoskeleton. It localises to the microtubule organizing center. It is found in the centrosome. The protein localises to the chromosome. Its subcellular location is the centromere. The protein resides in the kinetochore. It localises to the spindle. Its function is as follows. Probable microtubule plus-end tracking protein that promotes the stabilization of dynamic microtubules. Required for the formation of mitotic and meiotic spindles. Specifically promotes the polymerization of kinetochore-bound microtubules. Also required for cytoplasmic streaming. This chain is Protein CLASP-2 (cls-2), found in Caenorhabditis briggsae.